Reading from the N-terminus, the 193-residue chain is dCTP deaminase (193 aa).

Residues 110 to 115 (RSSLAR), Asp-128, 136 to 138 (VLE), Tyr-171, Lys-178, and Gln-182 each bind dCTP. Catalysis depends on Glu-138, which acts as the Proton donor/acceptor. Residues 173–193 (KRKNAKYKDQQDAVASRISQD) form a disordered region.

This sequence belongs to the dCTP deaminase family. Homotrimer.

It carries out the reaction dCTP + H2O + H(+) = dUTP + NH4(+). It functions in the pathway pyrimidine metabolism; dUMP biosynthesis; dUMP from dCTP (dUTP route): step 1/2. In terms of biological role, catalyzes the deamination of dCTP to dUTP. The sequence is that of dCTP deaminase from Shewanella sp. (strain ANA-3).